A 547-amino-acid chain; its full sequence is Chaperonin GroEL (547 aa).

Residues 30–33 (TLGP), Lys51, 87–91 (DGTTT), Gly415, 479–481 (NAA), and Asp495 each bind ATP.

It belongs to the chaperonin (HSP60) family. In terms of assembly, forms a cylinder of 14 subunits composed of two heptameric rings stacked back-to-back. Interacts with the co-chaperonin GroES.

It is found in the cytoplasm. It catalyses the reaction ATP + H2O + a folded polypeptide = ADP + phosphate + an unfolded polypeptide.. In terms of biological role, together with its co-chaperonin GroES, plays an essential role in assisting protein folding. The GroEL-GroES system forms a nano-cage that allows encapsulation of the non-native substrate proteins and provides a physical environment optimized to promote and accelerate protein folding. The polypeptide is Chaperonin GroEL (Nitratidesulfovibrio vulgaris (strain ATCC 29579 / DSM 644 / CCUG 34227 / NCIMB 8303 / VKM B-1760 / Hildenborough) (Desulfovibrio vulgaris)).